A 312-amino-acid chain; its full sequence is DNA-directed RNA polymerase subunit alpha (312 aa).

The tract at residues 1 to 226 (MIEFKKPNIT…EHFKAFESAD (226 aa)) is alpha N-terminal domain (alpha-NTD). The interval 243-312 (KEKKLEMTIE…DLGLSLRQED (70 aa)) is alpha C-terminal domain (alpha-CTD).

It belongs to the RNA polymerase alpha chain family. As to quaternary structure, homodimer. The RNAP catalytic core consists of 2 alpha, 1 beta, 1 beta' and 1 omega subunit. When a sigma factor is associated with the core the holoenzyme is formed, which can initiate transcription.

It catalyses the reaction RNA(n) + a ribonucleoside 5'-triphosphate = RNA(n+1) + diphosphate. In terms of biological role, DNA-dependent RNA polymerase catalyzes the transcription of DNA into RNA using the four ribonucleoside triphosphates as substrates. This is DNA-directed RNA polymerase subunit alpha from Lactobacillus delbrueckii subsp. bulgaricus (strain ATCC 11842 / DSM 20081 / BCRC 10696 / JCM 1002 / NBRC 13953 / NCIMB 11778 / NCTC 12712 / WDCM 00102 / Lb 14).